A 336-amino-acid chain; its full sequence is DNA repair protein XRCC4 (336 aa).

The interaction with IFFO1 stretch occupies residues 1–213 (MERKISRIHL…EREKDIKQEG (213 aa)). S53 carries the post-translational modification Phosphoserine; by PRKDC. Coiled-coil stretches lie at residues 131–165 (LDTI…FEKC) and 184–212 (LNEK…IKQE). The segment at 180–213 (FILVLNEKKTKIRSLHNKLLNAAQEREKDIKQEG) is interaction with LIG4. S193 bears the Phosphoserine; by PRKDC mark. K210 participates in a covalent cross-link: Glycyl lysine isopeptide (Lys-Gly) (interchain with G-Cter in SUMO). The disordered stretch occupies residues 212 to 249 (EGETAICSEMTADRDPVYDESTDEESENQTDLSGLASA). A Phosphotyrosine modification is found at Y229. Positions 229 to 239 (YDESTDEESEN) are enriched in acidic residues. S232 carries the post-translational modification Phosphoserine. The residue at position 233 (T233) is a Phosphothreonine; by CK2. S237 and S256 each carry phosphoserine. At S260 the chain carries Phosphoserine; by PRKDC. The disordered stretch occupies residues 264–336 (TDIAPSRKRR…SSPEDLFDEI (73 aa)). Residues 270–275 (RKRRQR) carry the Nuclear localization signal motif. K296 is covalently cross-linked (Glycyl lysine isopeptide (Lys-Gly) (interchain with G-Cter in ubiquitin)). A phosphoserine; by PRKDC mark is found at S303, S304, S315, and S320. Polar residues predominate over residues 317 to 329 (ENMSLETLRNSSP). T323 is subject to Phosphothreonine; by PRKDC. S327 and S328 each carry phosphoserine; by PRKDC.

The protein belongs to the XRCC4-XLF family. XRCC4 subfamily. In terms of assembly, homodimer and homotetramer in solution. Interacts with NHEJ1/XLF; the interaction is direct and is mediated via a head-to-head interaction between N-terminal head regions. Interacts with LIG4; the LIG4-XRCC4 subcomplex has a 1:2 stoichiometry and XRCC4 is required for LIG4 stability. Component of the core long-range non-homologous end joining (NHEJ) complex (also named DNA-PK complex) composed of PRKDC, LIG4, XRCC4, XRCC6/Ku70, XRCC5/Ku86 and NHEJ1/XLF. Additional component of the NHEJ complex includes PAXX. Following autophosphorylation, PRKDC dissociates from DNA, leading to formation of the short-range NHEJ complex, composed of LIG4, XRCC4, XRCC6/Ku70, XRCC5/Ku86 and NHEJ1/XLF. Interacts with PRKDC; the interaction is direct. Interacts with XRCC6/Ku70; the interaction is direct. Interacts with APTX and APLF. Forms a heterotetramer with IFFO1; the interaction involves LIG4-free XRCC4 and leads to the relocalization of IFFO1 to the sites of DNA damage. Interacts with PNKP; mainly interacts with PNKP when phosphorylated at Thr-233, but is also able to interact at much lower level with PNKP when not unphosphorylated. Interacts with POLL (DNA polymerase lambda). As to quaternary structure, interacts with XKR4; interacts with the processed form of XKR4, which is cleaved by caspase. Post-translationally, phosphorylated by PRKDC at the C-terminus in response to DNA damage; Ser-260 and Ser-320 constitute the main phosphorylation sites. Phosphorylations by PRKDC at the C-terminus of XRCC4 and NHEJ1/XLF are highly redundant and regulate ability of the XRCC4-NHEJ1/XLF subcomplex to bridge DNA. Phosphorylation by PRKDC does not prevent interaction with NHEJ1/XLF but disrupts ability to bridge DNA and promotes detachment from DNA. Phosphorylation at Ser-327 and Ser-328 by PRKDC promotes recognition by the SCF(FBXW7) complex and subsequent ubiquitination via 'Lys-63'-linked ubiquitin. Phosphorylation at Thr-233 by CK2 promotes interaction with PNKP; regulating PNKP activity and localization to DNA damage sites. Phosphorylation by CK2 promotes interaction with APTX. In terms of processing, ubiquitinated at Lys-296 by the SCF(FBXW7) complex via 'Lys-63'-linked ubiquitination, thereby promoting double-strand break repair: the SCF(FBXW7) complex specifically recognizes XRCC4 when phosphorylated at Ser-327 and Ser-328 by PRKDC, and 'Lys-63'-linked ubiquitination facilitates DNA non-homologous end joining (NHEJ) by enhancing association with XRCC5/Ku80 and XRCC6/Ku70. Monoubiquitinated. Undergoes proteolytic processing by caspase-3 (CASP3). This generates the protein XRCC4, C-terminus (XRCC4/C), which translocates to the cytoplasm and activates phospholipid scramblase activity of XKR4, thereby promoting phosphatidylserine exposure on apoptotic cell surface. In terms of tissue distribution, widely expressed.

The protein localises to the nucleus. It is found in the chromosome. The protein resides in the cytoplasm. In terms of biological role, DNA non-homologous end joining (NHEJ) core factor, required for double-strand break repair and V(D)J recombination. Acts as a scaffold protein that regulates recruitment of other proteins to DNA double-strand breaks (DSBs). Associates with NHEJ1/XLF to form alternating helical filaments that bridge DNA and act like a bandage, holding together the broken DNA until it is repaired. The XRCC4-NHEJ1/XLF subcomplex binds to the DNA fragments of a DSB in a highly diffusive manner and robustly bridges two independent DNA molecules, holding the broken DNA fragments in close proximity to one other. The mobility of the bridges ensures that the ends remain accessible for further processing by other repair factors. Plays a key role in the NHEJ ligation step of the broken DNA during DSB repair via direct interaction with DNA ligase IV (LIG4): the LIG4-XRCC4 subcomplex reseals the DNA breaks after the gap filling is completed. XRCC4 stabilizes LIG4, regulates its subcellular localization and enhances LIG4's joining activity. Binding of the LIG4-XRCC4 subcomplex to DNA ends is dependent on the assembly of the DNA-dependent protein kinase complex DNA-PK to these DNA ends. Promotes displacement of PNKP from processed strand break termini. Acts as an activator of the phospholipid scramblase activity of XKR4. This form, which is generated upon caspase-3 (CASP3) cleavage, translocates into the cytoplasm and interacts with XKR4, thereby promoting phosphatidylserine scramblase activity of XKR4 and leading to phosphatidylserine exposure on apoptotic cell surface. This Homo sapiens (Human) protein is DNA repair protein XRCC4.